Here is a 155-residue protein sequence, read N- to C-terminus: NADPH-dependent 7-cyano-7-deazaguanine reductase (155 aa).

Cys-52 acts as the Thioimide intermediate in catalysis. Residue Asp-59 is the Proton donor of the active site. Substrate is bound by residues 74-76 (VES) and 93-94 (HE).

It belongs to the GTP cyclohydrolase I family. QueF type 1 subfamily.

The protein resides in the cytoplasm. The catalysed reaction is 7-aminomethyl-7-carbaguanine + 2 NADP(+) = 7-cyano-7-deazaguanine + 2 NADPH + 3 H(+). It participates in tRNA modification; tRNA-queuosine biosynthesis. Functionally, catalyzes the NADPH-dependent reduction of 7-cyano-7-deazaguanine (preQ0) to 7-aminomethyl-7-deazaguanine (preQ1). This Syntrophobacter fumaroxidans (strain DSM 10017 / MPOB) protein is NADPH-dependent 7-cyano-7-deazaguanine reductase.